Here is a 486-residue protein sequence, read N- to C-terminus: MEKSKNIWSLILTEIKKELSEEEFYVWFENLCFLESIGDNIKISTPNLFHKNQIEKRFTKKIKEILIKNGYNNIVIVFTNQPPKTHSNKQETKNPALNETFSKFDKLKEKTTSKEAIQNIQDRIKMYIKKEEEEPTNFKNPFLKKRYTFENFIIGPNNKLAYNASLSISKNPGKKYNPCLIYGGVGLGKTHLLQSIGNKTEELHHNLKILYVTAENFLNEFVESIKTHETKKFKKKYRYLDMLLIDDIHDLQKKEGIQEELFHTFNALYEDNKQLVFTCDRSPSELTNFTDRLKSRFTRGLNVDISKPNFELRAAIVEKKAEEDGINVPKNILNLVAQKVTTNVRDLEAAVTKLKAYIDLDNIEIDIEIVEKIIKEIIIYEKETTNEPNNKINIENIKKILLRELKITHKDIEGHSKKPEITKARHIYAYLLRNFTELSTVEIGKIIGGKTHSTVLYSINKIDRDRNNDKEINNLITELMNKIKKN.

Residues Met1 to Thr79 form a domain I, interacts with DnaA modulators region. Residues Thr79 to Pro141 form a domain II region. The domain III, AAA+ region stretch occupies residues Phe142–Ile358. ATP contacts are provided by Gly186, Gly188, Lys189, and Thr190. Residues Asp359–Asn486 form a domain IV, binds dsDNA region.

It belongs to the DnaA family. As to quaternary structure, oligomerizes as a right-handed, spiral filament on DNA at oriC.

Its subcellular location is the cytoplasm. Its function is as follows. Plays an essential role in the initiation and regulation of chromosomal replication. ATP-DnaA binds to the origin of replication (oriC) to initiate formation of the DNA replication initiation complex once per cell cycle. Binds the DnaA box (a 9 base pair repeat at the origin) and separates the double-stranded (ds)DNA. Forms a right-handed helical filament on oriC DNA; dsDNA binds to the exterior of the filament while single-stranded (ss)DNA is stabiized in the filament's interior. The ATP-DnaA-oriC complex binds and stabilizes one strand of the AT-rich DNA unwinding element (DUE), permitting loading of DNA polymerase. After initiation quickly degrades to an ADP-DnaA complex that is not apt for DNA replication. Binds acidic phospholipids. Binds to the bpuR promoter, possibly at 5'-TTTTTAAA-3'. The sequence is that of Chromosomal replication initiator protein DnaA from Borreliella burgdorferi (strain ATCC 35210 / DSM 4680 / CIP 102532 / B31) (Borrelia burgdorferi).